The chain runs to 400 residues: Large envelope protein (400 aa).

Met1 bears the N-acetylmethionine mark. The N-myristoyl glycine; by host moiety is linked to residue Gly2. The segment at 2–119 (GAPLSTTRRG…PPLRDTHPQA (118 aa)) is pre-S1. Residues 2–174 (GAPLSTTRRG…FSKTGGPAMN (173 aa)) form a pre-S region. The Virion surface; in external conformation portion of the chain corresponds to 2 to 181 (GAPLSTTRRG…AMNMDNITSG (180 aa)). The Intravirion; in internal conformation segment spans residues 2–253 (GAPLSTTRRG…PGYRWMCLRR (252 aa)). Pro4 carries an N-linked (GlcNAc...) asparagine glycan. The tract at residues 84-117 (VLTTLPADPPPASTNRRSGRKPTPVSPPLRDTHP) is disordered. The tract at residues 120 to 174 (MQWNSTQFHQALLDPRVRALYFPAGGSSSGTQNPAPTIASLTSSIFSKTGGPAMN) is pre-S2. The helical transmembrane segment at 182–202 (LLGPLLVLQAVCFLLTKILTI) threads the bilayer. At 203–253 (PQSLDSWWTSLNFLGGLPGCPGQNSQSPTSNHLPTSCPPTCPGYRWMCLRR) the chain is on the intravirion; in external conformation side. The helical transmembrane segment at 254 to 274 (FIIFLFILLLCLIFLLVLLDY) threads the bilayer. Residues 275 to 348 (QGMLPVCPLL…WASARFSWLS (74 aa)) lie on the Virion surface side of the membrane. Asn320 carries N-linked (GlcNAc...) asparagine; by host glycosylation. A helical membrane pass occupies residues 349-369 (LLVQFVQWCVGLSPTVWLLVI). At 370-375 (WMIWYW) the chain is on the intravirion side. Residues 376–398 (GPNLCSILSPFIPLLPIFCYLWV) traverse the membrane as a helical segment. The Virion surface portion of the chain corresponds to 399-400 (SI).

This sequence belongs to the orthohepadnavirus major surface antigen family. In terms of assembly, in its internal form (Li-HBsAg), interacts with the capsid protein and with the isoform S. Interacts with host chaperone CANX. Associates with host chaperone CANX through its pre-S2 N glycan; this association may be essential for isoform M proper secretion. As to quaternary structure, interacts with isoform L. Interacts with the antigens of satellite virus HDV (HDVAgs); this interaction is required for encapsidation of HDV genomic RNA. Post-translationally, isoform M is N-terminally acetylated by host at a ratio of 90%, and N-glycosylated by host at the pre-S2 region. In terms of processing, myristoylated.

The protein localises to the virion membrane. The large envelope protein exists in two topological conformations, one which is termed 'external' or Le-HBsAg and the other 'internal' or Li-HBsAg. In its external conformation the protein attaches the virus to cell receptors and thereby initiating infection. This interaction determines the species specificity and liver tropism. This attachment induces virion internalization predominantly through caveolin-mediated endocytosis. The large envelope protein also assures fusion between virion membrane and endosomal membrane. In its internal conformation the protein plays a role in virion morphogenesis and mediates the contact with the nucleocapsid like a matrix protein. Functionally, the middle envelope protein plays an important role in the budding of the virion. It is involved in the induction of budding in a nucleocapsid independent way. In this process the majority of envelope proteins bud to form subviral lipoprotein particles of 22 nm of diameter that do not contain a nucleocapsid. In Hepatitis B virus genotype F2 (isolate Brazil/w4B) (HBV-F), this protein is Large envelope protein.